Reading from the N-terminus, the 1023-residue chain is StAR-related lipid transfer protein 8 (1023 aa).

Disordered regions lie at residues 46-67 (PMGS…SSCE) and 82-161 (TVSL…KVSK). Positions 99–114 (PSSSDRPLLSPTQGQE) are enriched in polar residues. Ser-108 is modified (phosphoserine). Over residues 120–130 (AKKRHRNRSFL) the composition is skewed to basic residues. A compositionally biased stretch (polar residues) spans 143–161 (GSQQAEPKHSPATSEKVSK). Arg-169 bears the Asymmetric dimethylarginine mark. Phosphoserine occurs at positions 235 and 238. Over residues 387–397 (PAQAPAEAEPV) the composition is skewed to low complexity. Disordered regions lie at residues 387–461 (PAQA…MNEA) and 467–486 (LAGL…VGAS). Over residues 441–459 (ISDTVASSSELDSSGNSMN) the composition is skewed to polar residues. 2 positions are modified to phosphoserine: Ser-498 and Ser-506. The region spanning 573 to 777 (PPLIHVQRTG…HMISDCKKLF (205 aa)) is the Rho-GAP domain. The segment at 733 to 757 (KKDSPSPRIKSKRSLIGRPGPRDLS) is disordered. One can recognise an START domain in the interval 809–1017 (AQAAGVSLSL…RDSFPTLQAA (209 aa)).

As to quaternary structure, binds both the SH2 and PTB domains of TNS1. In terms of tissue distribution, widely expressed with highest levels in kidney, lung and placenta.

It localises to the cell junction. The protein resides in the focal adhesion. In terms of biological role, accelerates GTPase activity of RHOA and CDC42, but not RAC1. Stimulates the hydrolysis of phosphatidylinositol 4,5-bisphosphate by PLCD1. The sequence is that of StAR-related lipid transfer protein 8 (STARD8) from Homo sapiens (Human).